A 107-amino-acid polypeptide reads, in one-letter code: 2Fe-2S ferredoxin CtmE (107 aa).

In terms of domain architecture, 2Fe-2S ferredoxin-type spans 3–106 (VKVTYVDSAN…GLVIHTLEPE (104 aa)). 4 residues coordinate [2Fe-2S] cluster: Cys41, Cys47, Cys50, and Cys87.

Belongs to the adrenodoxin/putidaredoxin family. [2Fe-2S] cluster is required as a cofactor.

It participates in terpene metabolism; monoterpene degradation. Involved in the degradation of the cyclic monoterpene limonene. Probably part of an electron transfer system involved in the oxidation of limonene to perillyl alcohol. The protein is 2Fe-2S ferredoxin CtmE of Castellaniella defragrans (strain DSM 12143 / CCUG 39792 / 65Phen) (Alcaligenes defragrans).